We begin with the raw amino-acid sequence, 437 residues long: Protein farnesyltransferase subunit beta (437 aa).

PFTB repeat units lie at residues 123–164 (ATDV…CIIG), 174–215 (REKL…SLTN), 222–263 (FEGT…VILK), 270–312 (LKSL…PLLH), and 332–374 (QQAL…SIAQ). Residues 248-251 (HGGY) and 291-294 (RCNK) contribute to the (2E,6E)-farnesyl diphosphate site. Positions 297 and 299 each coordinate Zn(2+). (2E,6E)-farnesyl diphosphate is bound at residue 300-303 (YSFW). H362 contributes to the Zn(2+) binding site. The residue at position 436 (T436) is a Phosphothreonine.

This sequence belongs to the protein prenyltransferase subunit beta family. Heterodimer of FNTA and FNTB. Zn(2+) serves as cofactor.

It catalyses the reaction L-cysteinyl-[protein] + (2E,6E)-farnesyl diphosphate = S-(2E,6E)-farnesyl-L-cysteinyl-[protein] + diphosphate. In terms of biological role, essential subunit of the farnesyltransferase complex. Catalyzes the transfer of a farnesyl moiety from farnesyl diphosphate to a cysteine at the fourth position from the C-terminus of several proteins having the C-terminal sequence Cys-aliphatic-aliphatic-X. The protein is Protein farnesyltransferase subunit beta (FNTB) of Bos taurus (Bovine).